Consider the following 62-residue polypeptide: Small ribosomal subunit protein eS17 (62 aa).

This sequence belongs to the eukaryotic ribosomal protein eS17 family.

This Methanoculleus marisnigri (strain ATCC 35101 / DSM 1498 / JR1) protein is Small ribosomal subunit protein eS17.